The primary structure comprises 348 residues: 3-isopropylmalate dehydrogenase (348 aa).

76-87 (GPKWTDPNNRPE) provides a ligand contact to NAD(+). R94, R104, R132, and D217 together coordinate substrate. Residues D217, D241, and D245 each coordinate Mg(2+). 275–287 (GSAPDIAGKNVAN) is an NAD(+) binding site.

It belongs to the isocitrate and isopropylmalate dehydrogenases family. LeuB type 1 subfamily. In terms of assembly, homodimer. It depends on Mg(2+) as a cofactor. The cofactor is Mn(2+).

Its subcellular location is the cytoplasm. It catalyses the reaction (2R,3S)-3-isopropylmalate + NAD(+) = 4-methyl-2-oxopentanoate + CO2 + NADH. The protein operates within amino-acid biosynthesis; L-leucine biosynthesis; L-leucine from 3-methyl-2-oxobutanoate: step 3/4. In terms of biological role, catalyzes the oxidation of 3-carboxy-2-hydroxy-4-methylpentanoate (3-isopropylmalate) to 3-carboxy-4-methyl-2-oxopentanoate. The product decarboxylates to 4-methyl-2 oxopentanoate. This is 3-isopropylmalate dehydrogenase from Staphylococcus aureus (strain MRSA252).